The following is a 475-amino-acid chain: METETNFKIYNPLQQLEQGSIGGGSGSIPAGSVTGGAGGSIANATITNINIAAGTITGGSGGNIAAGTITGGSGGNIAPNTITAGELAAGAAAANINSGPAGAVNGSKVSKADNTNFGVIEFDPSGDLTQTAAGSGIAVLKTGAAAANINAGPAGAINSSQIAGGPFLSSSPGSVTGGPGGNIAAGTVTGGSGGDLAAGTVTGGAGGNIAAGTVTGGAGGNIAANTITAGELAAGAAAANINSGPAGAVNGSQISKADNTNFGVIEFDPSGDLKQTAAGSGIALVKQPAAGTSVTIAGFDSSGTFITSKVGSIVAAAVPNGTSLNFYNIMIRYPTVAPISLQISVAAVGAAPPPGPGFIGIGEQRWIVNTTINPNPPPPANPNPGTTPYLRTESRVTQNSVAVGTFSYLNVNNVATGAISALATPWDNSEQTVQGGAYERYEFYINDGVDASGYRVTAFYFSPSSFITIERLQGN.

This is an uncharacterized protein from Acheta domesticus (House cricket).